Consider the following 309-residue polypeptide: Uricase (309 aa).

N-acetylalanine is present on Ala-2. Catalysis depends on charge relay system residues Lys-16 and Thr-63. Urate is bound by residues Thr-63, Asp-64, Phe-165, Arg-182, Val-237, Gln-238, and Asn-264. Catalysis depends on His-266, which acts as the Charge relay system. Positions 307 to 309 (SKL) match the Microbody targeting signal motif.

Belongs to the uricase family.

Its subcellular location is the peroxisome. It carries out the reaction urate + O2 + H2O = 5-hydroxyisourate + H2O2. Its pathway is purine metabolism; urate degradation; (S)-allantoin from urate: step 1/3. Its function is as follows. Catalyzes the oxidation of uric acid to 5-hydroxyisourate, which is further processed to form (S)-allantoin. The chain is Uricase from Arabidopsis thaliana (Mouse-ear cress).